Here is a 643-residue protein sequence, read N- to C-terminus: Protein disulfide-isomerase A4 (643 aa).

An N-terminal signal peptide occupies residues 1–20 (MRPRKAWMLVLLLALVQLLA). 2 consecutive Thioredoxin domains span residues 21–168 (VASA…EVSQ) and 170–300 (NWTP…EFLK). Residues 24–54 (AGAPDEDSTDKEDAIEEDEEEDEDDDDDDDD) form a disordered region. Acidic residues predominate over residues 27–54 (PDEDSTDKEDAIEEDEEEDEDDDDDDDD). The short motif at 90-93 (CGHC) is the CXXC element. 2 disulfide bridges follow: Cys-90-Cys-93 and Cys-205-Cys-208. An N6-acetyllysine modification is found at Lys-365. The Thioredoxin 3 domain occupies 503–634 (FKKGKLKPVI…LSKFIEEHAT (132 aa)). Residues 553 to 556 (CGHC) carry the CXXC motif. A disulfide bridge connects residues Cys-553 and Cys-556. The Prevents secretion from ER motif lies at 640-643 (KEEL).

It belongs to the protein disulfide isomerase family. As to quaternary structure, part of a large chaperone multiprotein complex comprising DNAJB11, HSP90B1, HSPA5, HYOU, PDIA2, PDIA4, PDIA6, PPIB, SDF2L1, UGGT1 and very small amounts of ERP29, but not, or at very low levels, CALR nor CANX. Component of a complex containing at least CRELD2, MANF, MATN3 and PDIA4.

It is found in the endoplasmic reticulum lumen. The protein localises to the melanosome. It carries out the reaction Catalyzes the rearrangement of -S-S- bonds in proteins.. This chain is Protein disulfide-isomerase A4 (PDIA4), found in Bos taurus (Bovine).